The primary structure comprises 460 residues: Argininosuccinate lyase (460 aa).

Belongs to the lyase 1 family. Argininosuccinate lyase subfamily.

The protein localises to the cytoplasm. It catalyses the reaction 2-(N(omega)-L-arginino)succinate = fumarate + L-arginine. It functions in the pathway amino-acid biosynthesis; L-arginine biosynthesis; L-arginine from L-ornithine and carbamoyl phosphate: step 3/3. The polypeptide is Argininosuccinate lyase (Lacticaseibacillus paracasei (strain ATCC 334 / BCRC 17002 / CCUG 31169 / CIP 107868 / KCTC 3260 / NRRL B-441) (Lactobacillus paracasei)).